Reading from the N-terminus, the 254-residue chain is Small ribosomal subunit protein uS2 (254 aa).

The protein belongs to the universal ribosomal protein uS2 family.

The chain is Small ribosomal subunit protein uS2 from Legionella pneumophila (strain Corby).